The sequence spans 528 residues: Glycerol kinase 5 (528 aa).

2 residues coordinate ATP: S28 and S29. The glycerol site is built by R98, D275, and Q276. Residues T297, G340, and G440 each coordinate ATP.

Belongs to the FGGY kinase family.

The protein localises to the cytoplasm. It carries out the reaction glycerol + ATP = sn-glycerol 3-phosphate + ADP + H(+). Its pathway is polyol metabolism; glycerol degradation via glycerol kinase pathway; sn-glycerol 3-phosphate from glycerol: step 1/1. Its function is as follows. Skin-specific kinase that plays a key role in glycerol metabolism, catalyzing its phosphorylation to produce sn-glycerol 3-phosphate. Involved in skin-specific regulation of sterol regulatory element-binding protein (SREBP) processing and lipid biosynthesis. The protein is Glycerol kinase 5 (GK5) of Bos taurus (Bovine).